Consider the following 346-residue polypeptide: Upstream stimulatory factor 2 (346 aa).

Disordered stretches follow at residues 1–44 (MDML…PGAE) and 215–244 (APRT…NEVE). Low complexity predominate over residues 11–20 (ASSATAAAAA). The segment covering 226-244 (DGTRTPRDERRRAQHNEVE) has biased composition (basic and acidic residues). One can recognise a bHLH domain in the interval 235–290 (RRRAQHNEVERRRRDKINNWIVQLSKIIPDCHADNSKTGASKGGILSKACDYIREL). The segment at 307 to 328 (LQMDNELLRQQIEELKNENALL) is leucine-zipper.

Efficient DNA binding requires dimerization with another bHLH protein. Binds DNA as a homodimer or a heterodimer (USF1/USF2). Interacts with MAF.

It is found in the nucleus. Transcription factor that binds to a symmetrical DNA sequence (E-boxes) (5'-CACGTG-3') that is found in a variety of viral and cellular promoters. The protein is Upstream stimulatory factor 2 (Usf2) of Mus musculus (Mouse).